A 247-amino-acid chain; its full sequence is Dof zinc finger protein DOF3.5 (247 aa).

The Dof-type zinc finger occupies 25 to 79 (PSCPRCGSSNTKFCYYNNYSLTQPRYFCKGCRRYWTKGGSLRNVPVGGGCRKSRR). Zn(2+) is bound by residues C27, C30, C52, and C55. Positions 70–100 (VGGGCRKSRRPKSSSGNNTKTSLTANSGNPG) are disordered. A compositionally biased stretch (polar residues) spans 82 to 94 (SSSGNNTKTSLTA).

It is found in the nucleus. Functionally, transcription factor that binds specifically to a 5'-AA[AG]G-3' consensus core sequence. This is Dof zinc finger protein DOF3.5 (DOF3.5) from Arabidopsis thaliana (Mouse-ear cress).